The sequence spans 146 residues: Hemoglobin subunit beta (146 aa).

N-acetylvaline is present on Val1. Residues 2–146 (HLTPEEKNAV…VANALAHKYH (145 aa)) enclose the Globin domain. A Phosphothreonine modification is found at Thr12. Ser44 carries the post-translational modification Phosphoserine. Lys59 bears the N6-acetyllysine mark. His63 serves as a coordination point for heme b. At Lys82 the chain carries N6-acetyllysine. Residue His92 coordinates heme b. Cys93 carries the S-nitrosocysteine modification. Lys144 is modified (N6-acetyllysine).

The protein belongs to the globin family. As to quaternary structure, heterotetramer of two alpha chains and two beta chains. In terms of tissue distribution, red blood cells.

Involved in oxygen transport from the lung to the various peripheral tissues. The protein is Hemoglobin subunit beta (HBB) of Macaca mulatta (Rhesus macaque).